A 724-amino-acid chain; its full sequence is Long-chain-fatty-acid--CoA ligase ACSBG1 (724 aa).

The tract at residues 1 to 51 (MPRNSGAGYGCPHGDPSMLDSRETPQESRQDMTVGTTQEKLKTSSLTDRQP) is disordered. Residues 20 to 30 (DSRETPQESRQ) are compositionally biased toward basic and acidic residues. A compositionally biased stretch (polar residues) spans 31 to 51 (DMTVGTTQEKLKTSSLTDRQP). A phosphoserine mark is found at serine 53 and serine 56. ATP contacts are provided by residues 282–290 (TSGTTGNPK), 472–477 (AGYGLS), aspartate 550, and arginine 565. Tyrosine 658 is modified (phosphotyrosine). ATP is bound at residue lysine 701.

This sequence belongs to the ATP-dependent AMP-binding enzyme family. Bubblegum subfamily.

Its subcellular location is the cytoplasm. It localises to the cytoplasmic vesicle. It is found in the microsome. The protein localises to the endoplasmic reticulum. The protein resides in the cell membrane. The enzyme catalyses a long-chain fatty acid + ATP + CoA = a long-chain fatty acyl-CoA + AMP + diphosphate. It carries out the reaction (E)-hexadec-2-enoate + ATP + CoA = (2E)-hexadecenoyl-CoA + AMP + diphosphate. The catalysed reaction is hexadecanoate + ATP + CoA = hexadecanoyl-CoA + AMP + diphosphate. Catalyzes the conversion of fatty acids such as long-chain and very long-chain fatty acids to their active form acyl-CoAs for both synthesis of cellular lipids, and degradation via beta-oxidation. Can activate diverse saturated, monosaturated and polyunsaturated fatty acids. This chain is Long-chain-fatty-acid--CoA ligase ACSBG1, found in Macaca fascicularis (Crab-eating macaque).